A 1745-amino-acid polypeptide reads, in one-letter code: Tight junction protein 1 (1745 aa).

The region spanning 23-110 is the PDZ 1 domain; sequence TVTLHRAPGF…NAKITIRRKK (88 aa). The segment covering 102–112 has biased composition (basic residues); the sequence is AKITIRRKKKV. Positions 102–189 are disordered; it reads AKITIRRKKK…QPAKPTKVTL (88 aa). A compositionally biased stretch (acidic residues) spans 123–136; sequence PVSDNEDDSYDEEV. At Ser-125 the chain carries Phosphoserine. Tyr-132 carries the phosphotyrosine modification. The span at 149–175 shows a compositional bias: basic and acidic residues; it reads RRSEKSWARDRSASRERSLSPRSDRRS. 3 positions are modified to phosphoserine: Ser-175, Ser-178, and Ser-179. Phosphothreonine is present on Thr-185. Residues 186–264 enclose the PDZ 2 domain; the sequence is KVTLVKSRKN…KLKMVVQRDE (79 aa). Phosphoserine is present on residues Ser-212 and Ser-241. Thr-267 carries the post-translational modification Phosphothreonine. Phosphoserine is present on residues Ser-275, Ser-277, Ser-280, Ser-284, Ser-290, Ser-294, Ser-297, Ser-300, Ser-323, Ser-329, Ser-334, Ser-337, and Ser-353. Residues 296–364 form a disordered region; sequence ASDHSGRSHD…PVKHVDDHPP (69 aa). Positions 299 to 308 are enriched in basic and acidic residues; that stretch reads HSGRSHDRPP. The segment covering 325-338 has biased composition (polar residues); that stretch reads HSTQSPQQPSNGSL. Residue Thr-354 is modified to Phosphothreonine. Positions 421-502 constitute a PDZ 3 domain; sequence SMKLVKFRKG…GEEVTILAQK (82 aa). The SH3 domain maps to 516–584; it reads GDSFYIRTHF…PNKNRAEQLA (69 aa). The region spanning 610–791 is the Guanylate kinase-like domain; that stretch reads SKRNLRKSRE…WYGALKEAIQ (182 aa). Phosphoserine occurs at positions 617 and 622. The tract at residues 633 to 876 is occludin (OCLN)-binding region; it reads YERVVLREAG…GTPPESAITR (244 aa). Thr-809 bears the Phosphothreonine mark. Residues Ser-810 and Ser-821 each carry the phosphoserine modification. Tyr-822 carries the post-translational modification Phosphotyrosine. Phosphoserine is present on residues Ser-824, Ser-828, and Ser-837. Disordered stretches follow at residues 825–944 and 956–1042; these read APGS…SASA and LEEP…YEPQ. Thr-846, Thr-848, Thr-854, Thr-861, and Thr-868 each carry phosphothreonine. Residues 879–892 show a composition bias toward basic and acidic residues; it reads EPVREDSSGMHHEN. Residues 893–906 show a composition bias toward low complexity; it reads QTYPPYSPQAQPQA. Residue Ser-912 is modified to Phosphoserine. Over residues 998–1014 the composition is skewed to basic and acidic residues; the sequence is DPAKVYRKEPYSEEMMR. A Phosphoserine modification is found at Ser-1071. A disordered region spans residues 1090-1586; the sequence is QWSYYDDKQP…STQPPEFDSG (497 aa). The span at 1106–1124 shows a compositional bias: basic and acidic residues; it reads ENQHPRDLDSRQHPEEASE. A Phosphoserine modification is found at Ser-1138. Tyr-1139 and Tyr-1164 each carry phosphotyrosine. Positions 1150-1370 are actin-binding region (ABR); it reads RTSTLRHEEQ…FDRRSFESKP (221 aa). Basic and acidic residues-rich tracts occupy residues 1268–1285 and 1335–1346; these read KMFE…KDVN and PPEDIVRSNHYD. At Tyr-1353 the chain carries Phosphotyrosine. At Ser-1365 the chain carries Phosphoserine. A compositionally biased stretch (low complexity) spans 1388 to 1399; the sequence is SQSQPNFSSYSS. A compositionally biased stretch (basic and acidic residues) spans 1401-1418; it reads GKPETDAVDRSFSEKRYD. Ser-1411 carries the post-translational modification Phosphoserine. A compositionally biased stretch (low complexity) spans 1431-1445; the sequence is SQYSQPAPPLSSSSL. 2 stretches are compositionally biased toward polar residues: residues 1455-1468 and 1510-1519; these read EGNS…NSYM and AEQTQKTITP. Residues 1535 to 1544 show a composition bias toward basic and acidic residues; it reads PFERKFESPK. The residue at position 1542 (Ser-1542) is a Phosphoserine. Residues 1561–1580 show a composition bias toward polar residues; that stretch reads SSKTPTSPKTLMKAHSSTQP. Ser-1614 bears the Phosphoserine mark. Positions 1631–1745 constitute a ZU5 domain; it reads ATARGIFNSN…NCVSVLIDHF (115 aa).

It belongs to the MAGUK family. In terms of assembly, homodimer. Forms heterodimers TJP3. Forms a heterodimer (via PDZ2 domain) with TJP2/ZO2 (via PDZ2 domain). Interacts with OCLN, CALM, claudins, CGN/cingulin, CXADR, GJD3 and UBN1. Interacts (via ZU5 domain) with CDC42BPB. Interacts (via PDZ domain) with GJA1. Interacts (via PDZ domains) with ANKRD2. Interacts with POPDC1 (via the C-terminus cytoplasmic tail). Interacts with GJA12 and KIRREL1. Interacts with HSPA4. Interacts (via ZU5 domain) with MYZAP. Interacts with DLL1. Interacts with USP53 (via the C-terminal region). Interacts with DNMBP (via C-terminal domain); required for the apical cell-cell junction localization of DNMBP. Interacts with SPEF1. Interacts (via N-terminus) with CTNNA1. Interacts with CLDN18. Interacts with CLDN16 (via TRV motif); this is a prerequisite for anchoring of CLDN16 at the tight junction. Interacts with PKP1; the interaction facilitates TJP1/ZO-1 localization to the plasma membrane. Interacts with PATJ (via PDZ1-6 domains); the interaction is required for attachment and extension of TJP1/ZO1 condensates along the apical cell interface. Post-translationally, phosphorylated at tyrosine redidues in response to epidermal growth factor (EGF). This response is dependent on an intact actin microfilament system. Dephosphorylated by PTPRJ. In terms of tissue distribution, expressed between ameloblasts, at ameloblast-ameloblast junctions and in the stratum intermedium during pre-secretory and secretory stages of tooth development (at protein level).

The protein resides in the cell membrane. The protein localises to the cell junction. It is found in the tight junction. Its subcellular location is the gap junction. It localises to the cytoplasm. The protein resides in the myofibril. The protein localises to the sarcomere. It is found in the i band. In terms of biological role, tjp1, TjpP2, and Tjp3 are closely related scaffolding proteins that link tight junction (TJ) transmembrane proteins such as claudins, junctional adhesion molecules, and occludin to the actin cytoskeleton. Forms a multistranded TJP1/ZO1 condensate which elongates to form a tight junction belt, the belt is anchored at the apical cell membrane via interaction with PATJ. The tight junction acts to limit movement of substances through the paracellular space and as a boundary between the compositionally distinct apical and basolateral plasma membrane domains of epithelial and endothelial cells. Necessary for lumenogenesis, and particularly efficient epithelial polarization and barrier formation. Plays a role in the regulation of cell migration by targeting Cdc42bpb to the leading edge of migrating cells. Plays an important role in podosome formation and associated function, thus regulating cell adhesion and matrix remodeling. With Tjp2 and TJjp3, participates in the junctional retention and stability of the transcription factor Dbpa, but is not involved in its shuttling to the nucleus. May play a role in mediating cell morphology changes during ameloblast differentiation via its role in tight junctions. This chain is Tight junction protein 1, found in Mus musculus (Mouse).